The sequence spans 403 residues: Chalcone synthase 2 (403 aa).

59 to 66 provides a ligand contact to CoA; it reads RFQRMCES. Cys168 functions as the Acyl-thioester intermediate in the catalytic mechanism. Residue 220–221 coordinates substrate; that stretch reads GD. Ala313 contacts CoA.

The protein belongs to the thiolase-like superfamily. Chalcone/stilbene synthases family. As to quaternary structure, homodimer.

The enzyme catalyses (E)-4-coumaroyl-CoA + 3 malonyl-CoA + 3 H(+) = 2',4,4',6'-tetrahydroxychalcone + 3 CO2 + 4 CoA. The protein operates within secondary metabolite biosynthesis; flavonoid biosynthesis. Its function is as follows. The primary product of this enzyme is 4,2',4',6'-tetrahydroxychalcone (also termed naringenin-chalcone or chalcone) which can under specific conditions spontaneously isomerize into naringenin. The polypeptide is Chalcone synthase 2 (CHS2) (Oryza sativa subsp. japonica (Rice)).